The following is a 185-amino-acid chain: Threonylcarbamoyl-AMP synthase (185 aa).

The YrdC-like domain maps to 4–185 (SWRVQQAARE…LATGNIVRPA (182 aa)).

Belongs to the SUA5 family. TsaC subfamily.

It is found in the cytoplasm. The catalysed reaction is L-threonine + hydrogencarbonate + ATP = L-threonylcarbamoyladenylate + diphosphate + H2O. In terms of biological role, required for the formation of a threonylcarbamoyl group on adenosine at position 37 (t(6)A37) in tRNAs that read codons beginning with adenine. Catalyzes the conversion of L-threonine, HCO(3)(-)/CO(2) and ATP to give threonylcarbamoyl-AMP (TC-AMP) as the acyladenylate intermediate, with the release of diphosphate. This chain is Threonylcarbamoyl-AMP synthase, found in Pseudomonas fluorescens (strain Pf0-1).